The sequence spans 349 residues: Arginine kinase (349 aa).

The region spanning 3 to 85 (DLAELWEKVS…LGPVILDYHK (83 aa)) is the Phosphagen kinase N-terminal domain. Substrate is bound at residue 58-62 (GVGVY). The 237-residue stretch at 113–349 (WIVSTRVRVG…EEIIKLEKAA (237 aa)) folds into the Phosphagen kinase C-terminal domain. ATP contacts are provided by residues 116–120 (STRVR) and His-179. Glu-219 is a substrate binding site. Arg-223 is an ATP binding site. Position 265 (Cys-265) interacts with substrate. ATP-binding positions include 274-278 (RASVH) and 302-307 (RGIHGE). Glu-307 lines the substrate pocket.

It belongs to the ATP:guanido phosphotransferase family.

It carries out the reaction L-arginine + ATP = N(omega)-phospho-L-arginine + ADP + H(+). The polypeptide is Arginine kinase (Liolophura japonica (Chiton)).